A 106-amino-acid chain; its full sequence is Large ribosomal subunit protein uL23 (106 aa).

The protein belongs to the universal ribosomal protein uL23 family. As to quaternary structure, part of the 50S ribosomal subunit. Contacts protein L29, and trigger factor when it is bound to the ribosome.

Its function is as follows. One of the early assembly proteins it binds 23S rRNA. One of the proteins that surrounds the polypeptide exit tunnel on the outside of the ribosome. Forms the main docking site for trigger factor binding to the ribosome. In Acinetobacter baylyi (strain ATCC 33305 / BD413 / ADP1), this protein is Large ribosomal subunit protein uL23.